The chain runs to 419 residues: Methylthioribose kinase (419 aa).

Positions 49 and 64 each coordinate ATP. A substrate-binding site is contributed by Asp239. 256–258 (DPE) serves as a coordination point for ATP. Arg365 lines the substrate pocket.

Belongs to the methylthioribose kinase family. Homodimer.

It carries out the reaction 5-(methylsulfanyl)-D-ribose + ATP = 5-(methylsulfanyl)-alpha-D-ribose 1-phosphate + ADP + H(+). It catalyses the reaction 5-deoxy-D-ribose + ATP = 5-deoxy-alpha-D-ribose 1-phosphate + ADP + H(+). It participates in amino-acid biosynthesis; L-methionine biosynthesis via salvage pathway; S-methyl-5-thio-alpha-D-ribose 1-phosphate from S-methyl-5'-thioadenosine (hydrolase route): step 2/2. Functionally, catalyzes the phosphorylation of methylthioribose into methylthioribose-1-phosphate. Also catalyzes the phosphorylation of 5-deoxyribose to 5-deoxyribose-1-phosphate. Part of a bifunctional DHAP-shunt salvage pathway for SAM by-products. The chain is Methylthioribose kinase from Escherichia coli O45:K1 (strain S88 / ExPEC).